Reading from the N-terminus, the 444-residue chain is NADH-ubiquinone oxidoreductase chain 4 (444 aa).

Transmembrane regions (helical) follow at residues Y4–V24, I28–I48, G53–I73, N87–L107, L109–G129, V141–I161, L173–V193, P212–F232, F245–F265, S272–W294, G306–G326, L330–L350, and I373–V393.

The protein belongs to the complex I subunit 4 family.

The protein resides in the mitochondrion membrane. It catalyses the reaction a ubiquinone + NADH + 5 H(+)(in) = a ubiquinol + NAD(+) + 4 H(+)(out). In terms of biological role, core subunit of the mitochondrial membrane respiratory chain NADH dehydrogenase (Complex I) that is believed to belong to the minimal assembly required for catalysis. Complex I functions in the transfer of electrons from NADH to the respiratory chain. The immediate electron acceptor for the enzyme is believed to be ubiquinone. In Locusta migratoria (Migratory locust), this protein is NADH-ubiquinone oxidoreductase chain 4 (ND4).